The sequence spans 176 residues: Prenylated Rab acceptor 1 (176 aa).

N-acetylmethionine is present on Met1. The short motif at 11 to 13 (SRF) is the SKL peroxisome targeting motif element. Ser18 carries the phosphoserine modification. Transmembrane regions (helical) follow at residues 84 to 104 (LLTNLLLLFVIVLVVAGIVGI) and 129 to 149 (VCVAVPIGFLASPISTLLWLI).

It belongs to the PRA1 family. In terms of assembly, interacts with YIP1 and the Rab GTPases SEC4, YPT1, YPT6, YPT10, YPT11, YPT31, YPT32 and YPT52.

Its subcellular location is the golgi apparatus membrane. The protein resides in the peroxisome membrane. The chain is Prenylated Rab acceptor 1 (YIP3) from Saccharomyces cerevisiae (strain ATCC 204508 / S288c) (Baker's yeast).